A 477-amino-acid chain; its full sequence is Octopamine receptor (477 aa).

Over 1-55 the chain is Extracellular; sequence MGQAATHVDANYTLINYTEEVIEDDRDACAVADDPKYPSSFGITLAVPEWEAICT. N-linked (GlcNAc...) asparagine glycosylation is found at Asn-11 and Asn-16. A helical transmembrane segment spans residues 56–78; sequence AIVLTLIIISTIVGNILVILSVF. Residues 79–88 are Cytoplasmic-facing; that stretch reads TYKPLRIVQN. A helical transmembrane segment spans residues 89–110; it reads FFIVSLAVADLTVAILVLPLNV. At 111–127 the chain is on the extracellular side; the sequence is AYSILGQWVFGIYVCKM. The helical transmembrane segment at 128–148 threads the bilayer; it reads WLTCDIMCCTSSILNLCAIAL. Residues 149–168 are Cytoplasmic-facing; the sequence is DRYWAITDPINYAQKRTLER. The helical transmembrane segment at 169–191 threads the bilayer; sequence VLLMIGVVWVLSLIISSPPLLGW. The Extracellular segment spans residues 192–216; the sequence is NDWPDVFEPDTPCRLTSQPGFVIFS. A helical transmembrane segment spans residues 217-238; sequence SSGSFYIPLVIMTVVYFEIYLA. The Cytoplasmic segment spans residues 239–405; the sequence is TKKRLRDRAK…LTRERRAART (167 aa). 2 disordered regions span residues 256–317 and 334–358; these read SSGQ…SKDD and VTDM…THED. Basic and acidic residues-rich tracts occupy residues 263–272 and 279–295; these read NNKDDHHDQD and NHNE…DNEK. Residues 296–312 show a composition bias toward basic residues; the sequence is KKRTRKLTPKKKPKRKY. A helical membrane pass occupies residues 406 to 427; it reads LGIIMGVFVVCWLPFFVIYLVI. Residues 428-439 are Extracellular-facing; sequence PFCASCCLSNKF. A helical membrane pass occupies residues 440–460; that stretch reads INFITWLGYCNSALNPLIYTI. Topologically, residues 461–477 are cytoplasmic; it reads FNMDFRRAFKKLLCMKP.

It belongs to the G-protein coupled receptor 1 family.

The protein localises to the cell membrane. Functionally, receptor for octopamine. Octopamine (OA) is a neurotransmitter, neurohormone, and neuromodulator in invertebrates. The activity of this receptor is mediated by G proteins which activate adenylyl cyclase. This chain is Octopamine receptor, found in Heliothis virescens (Tobacco budworm moth).